Here is a 152-residue protein sequence, read N- to C-terminus: uncharacterized protein (152 aa).

The next 5 membrane-spanning stretches (helical) occupy residues 2–22, 33–53, 58–78, 97–117, and 122–142; these read GVVF…LKLM, LKMI…WLIM, FLIE…LIYL, FMGN…IEYV, and IASP…FFNC.

Its subcellular location is the cell membrane. This is an uncharacterized protein from Methanocaldococcus jannaschii (strain ATCC 43067 / DSM 2661 / JAL-1 / JCM 10045 / NBRC 100440) (Methanococcus jannaschii).